A 489-amino-acid polypeptide reads, in one-letter code: 3-octaprenyl-4-hydroxybenzoate carboxy-lyase (489 aa).

Asparagine 172 provides a ligand contact to Mn(2+). Prenylated FMN-binding positions include 175–177 (IYR), 189–191 (RWL), and 194–195 (RG). Glutamate 238 contacts Mn(2+). The active-site Proton donor is the aspartate 287.

Belongs to the UbiD family. Homohexamer. It depends on prenylated FMN as a cofactor. Mn(2+) serves as cofactor.

It localises to the cell membrane. It carries out the reaction a 4-hydroxy-3-(all-trans-polyprenyl)benzoate + H(+) = a 2-(all-trans-polyprenyl)phenol + CO2. It participates in cofactor biosynthesis; ubiquinone biosynthesis. In terms of biological role, catalyzes the decarboxylation of 3-octaprenyl-4-hydroxy benzoate to 2-octaprenylphenol, an intermediate step in ubiquinone biosynthesis. This chain is 3-octaprenyl-4-hydroxybenzoate carboxy-lyase, found in Tolumonas auensis (strain DSM 9187 / NBRC 110442 / TA 4).